The sequence spans 273 residues: MLIWWRGKFRRADEISLDFSLFEKSLQGAVYETLRTYSRAPFAAYKHYTRLKRSADFFNLPLSLSFDEFTKVLKAGADEFKQEVRIKVYLFPDSGEVLFVFSPLNIPDLETGVEVKISNVRRIPDLSTPPALKITGRTDIVLARREIVDCYDVILLGLNGQVCEGSFSNVFLVKEGKLITPSLDSGILDGITRENVIKLAKSLEIPVEERVVWVWELFEADEMFLTHTSAGVVPVRRLNEHSFFEEEPGPVTATLMENFEPFVLNLEENWVGI.

At Lys133 the chain carries N6-(pyridoxal phosphate)lysine.

The protein belongs to the class-IV pyridoxal-phosphate-dependent aminotransferase family. The cofactor is pyridoxal 5'-phosphate.

It carries out the reaction L-leucine + 2-oxoglutarate = 4-methyl-2-oxopentanoate + L-glutamate. It catalyses the reaction L-isoleucine + 2-oxoglutarate = (S)-3-methyl-2-oxopentanoate + L-glutamate. The enzyme catalyses L-valine + 2-oxoglutarate = 3-methyl-2-oxobutanoate + L-glutamate. The protein operates within amino-acid biosynthesis; L-isoleucine biosynthesis; L-isoleucine from 2-oxobutanoate: step 4/4. It participates in amino-acid biosynthesis; L-leucine biosynthesis; L-leucine from 3-methyl-2-oxobutanoate: step 4/4. It functions in the pathway amino-acid biosynthesis; L-valine biosynthesis; L-valine from pyruvate: step 4/4. Its function is as follows. Acts on leucine, isoleucine and valine. The sequence is that of Probable branched-chain-amino-acid aminotransferase (ilvE) from Thermotoga maritima (strain ATCC 43589 / DSM 3109 / JCM 10099 / NBRC 100826 / MSB8).